The following is a 466-amino-acid chain: MVDVLNIESLDLEARGIAHRDGKVLFVEGALPGERVTVQTVRRKPSYEIAKVEEVLRPSSQRVAPRCPHFGVCGGCAMQHLAPAAQVAIKQRALEDTFWHVGKLKPARILPPLYGPTWGYRYRARLSVRVVPKKGGVLVGFHERKSSYVADMRECHVLPPAVSRLLLPLRAMIAAMSAPDRMPQIEVALGDETIVLVLRHLLPLTDGDIAVLRAFAAEHGVQWWLQSKGPDTVHPLEREHADALAYTLPEFGLRMPYRPTDFTQVNHAINRAMVSRALKLLDVQPQDRVADLFCGLGNFTLPLATQGREAVGVEGSKALTDRAHEAAARHGLGERTRFATLNLFEVDVQWLRGLGYFDRMLIDPPREGAQAVAQALSLLAPGERPRRIVYVSCSPGTLARDAAIMVHEGGYALRSAGVINMFPHTGHVESIAVFESLDEATVLQAQAQARQKAREEAERLAEAAAA.

In terms of domain architecture, TRAM spans 1–54 (MVDVLNIESLDLEARGIAHRDGKVLFVEGALPGERVTVQTVRRKPSYEIAKVEE). Residues cysteine 67, cysteine 73, cysteine 76, and cysteine 155 each coordinate [4Fe-4S] cluster. S-adenosyl-L-methionine is bound by residues glutamine 264, phenylalanine 293, asparagine 298, glutamate 314, asparagine 342, and aspartate 363. Catalysis depends on cysteine 393, which acts as the Nucleophile.

It belongs to the class I-like SAM-binding methyltransferase superfamily. RNA M5U methyltransferase family. RlmD subfamily.

The enzyme catalyses uridine(1939) in 23S rRNA + S-adenosyl-L-methionine = 5-methyluridine(1939) in 23S rRNA + S-adenosyl-L-homocysteine + H(+). Catalyzes the formation of 5-methyl-uridine at position 1939 (m5U1939) in 23S rRNA. This chain is 23S rRNA (uracil(1939)-C(5))-methyltransferase RlmD, found in Bordetella pertussis (strain Tohama I / ATCC BAA-589 / NCTC 13251).